Consider the following 1023-residue polypeptide: Sodium/potassium-transporting ATPase subunit alpha-1 (1023 aa).

Residues 1 to 5 constitute a propeptide that is removed on maturation; that stretch reads MGKGV. A compositionally biased stretch (basic and acidic residues) spans 1–11; sequence MGKGVGRDKYE. The segment at 1–38 is disordered; it reads MGKGVGRDKYEPAAVSEHGDKKSKKAKKERDMDELKKE. Over 6 to 87 the chain is Cytoplasmic; that stretch reads GRDKYEPAAV…NALTPPPTTP (82 aa). Lys9 is modified (N6-acetyllysine). Position 10 is a phosphotyrosine (Tyr10). Phosphoserine; by PKC is present on Ser16. Residue Lys21 is modified to N6-acetyllysine. Residue Ser23 is modified to Phosphoserine; by PKC. Residues 28 to 38 show a composition bias toward basic and acidic residues; sequence KERDMDELKKE. Phosphoserine occurs at positions 40 and 47. The segment at 82–84 is phosphoinositide-3 kinase binding; sequence PPP. Residues 88 to 108 traverse the membrane as a helical segment; that stretch reads EWVKFCRQLFGGFSMLLWIGA. At 109 to 131 the chain is on the extracellular side; that stretch reads ILCFLAYGIRSATEEEPPNDDLY. A helical transmembrane segment spans residues 132–152; sequence LGVVLSAVVIITGCFSYYQEA. The Cytoplasmic portion of the chain corresponds to 153–288; it reads KSSKIMESFK…GGQTPIAEEI (136 aa). A disordered region spans residues 216–235; sequence SSLTGESEPQTRSPDFTNEN. A Phosphoserine modification is found at Ser228. At Tyr260 the chain carries Phosphotyrosine. Residues 289-308 form a helical membrane-spanning segment; that stretch reads EHFIHLITGVAVFLGVSFFI. The Extracellular segment spans residues 309–320; sequence LSLILEYTWLEA. Residues 321-338 form a helical membrane-spanning segment; it reads VIFLIGIIVANVPEGLLA. Residues 339–772 are Cytoplasmic-facing; sequence TVTVCLTLTA…EEGRLIFDNL (434 aa). Asp376 acts as the 4-aspartylphosphate intermediate in catalysis. Ser452 and Ser484 each carry phosphoserine. An ATP-binding site is contributed by Lys487. Phosphotyrosine is present on Tyr542. The mediates interaction with SCN7A stretch occupies residues 596–717; it reads RAAVPDAVGK…QGAIVAVTGD (122 aa). Position 661 is an N6-succinyllysine (Lys661). 2 positions are modified to phosphoserine: Ser668 and Ser675. Mg(2+)-binding residues include Asp717 and Asp721. A helical membrane pass occupies residues 773–792; sequence KKSIAYTLTSNIPEITPFLI. At 793-802 the chain is on the extracellular side; that stretch reads FIIANIPLPL. Residues 803–823 traverse the membrane as a helical segment; it reads GTVTILCIDLGTDMVPAISLA. Topologically, residues 824–843 are cytoplasmic; it reads YEQAESDIMKRQPRNPKTDK. The helical transmembrane segment at 844–866 threads the bilayer; it reads LVNERLISMAYGQIGMIQALGGF. Residues 867–918 are Extracellular-facing; sequence FTYFVILAENGFLPFHLLGIRETWDDRWINDVEDSYGQQWTYEQRKIVEFTC. The helical transmembrane segment at 919–938 threads the bilayer; it reads HTAFFVSIVVVQWADLVICK. The Cytoplasmic segment spans residues 939 to 951; sequence TRRNSVFQQGMKN. Ser943 is modified (phosphoserine; by PKA). Residues 952–970 form a helical membrane-spanning segment; it reads KILIFGLFEETALAAFLSY. Topologically, residues 971–985 are extracellular; the sequence is CPGMGAALRMYPLKP. The chain crosses the membrane as a helical span at residues 986 to 1006; sequence TWWFCAFPYSLLIFVYDEVRK. Residues 1007 to 1023 lie on the Cytoplasmic side of the membrane; it reads LIIRRRPGGWVEKETYY.

This sequence belongs to the cation transport ATPase (P-type) (TC 3.A.3) family. Type IIC subfamily. As to quaternary structure, the sodium/potassium-transporting ATPase is composed of a catalytic alpha subunit, an auxiliary non-catalytic beta subunit and an additional regulatory subunit. Interacts with regulatory subunit FXYD1. Interacts with regulatory subunit FXYD3. Interacts with SLC35G1 and STIM1. Interacts with SIK1. Interacts with CLN3; this interaction regulates the sodium/potassium-transporting ATPase complex localization at the plasma membrane. Interacts with SCN7A; activates ATP1A1 P-type sodium:potassium-exchanging transporter activity which indirectly signals to nearby neurons to regulate sodium homeostasis. Post-translationally, phosphorylation on Tyr-10 modulates pumping activity. Phosphorylation of Ser-943 by PKA modulates the response of ATP1A1 to PKC. Dephosphorylation by protein phosphatase 2A (PP2A) following increases in intracellular sodium, leading to increase catalytic activity. In terms of tissue distribution, expressed in the central nervous system, in most motor and sensory axons of the ventral and dorsal roots, as well as in the large motor neurons of the ventral horn (at protein level).

It is found in the cell membrane. Its subcellular location is the basolateral cell membrane. It localises to the sarcolemma. The protein resides in the cell projection. The protein localises to the axon. It is found in the melanosome. The catalysed reaction is K(+)(out) + Na(+)(in) + ATP + H2O = K(+)(in) + Na(+)(out) + ADP + phosphate + H(+). This is the catalytic component of the active enzyme, which catalyzes the hydrolysis of ATP coupled with the exchange of sodium and potassium ions across the plasma membrane. This action creates the electrochemical gradient of sodium and potassium ions, providing the energy for active transport of various nutrients. Could also be part of an osmosensory signaling pathway that senses body-fluid sodium levels and controls salt intake behavior as well as voluntary water intake to regulate sodium homeostasis. The polypeptide is Sodium/potassium-transporting ATPase subunit alpha-1 (Atp1a1) (Rattus norvegicus (Rat)).